A 244-amino-acid polypeptide reads, in one-letter code: Nicotinamidase 1 (244 aa).

The protein belongs to the isochorismatase family. As to expression, expressed in roots and stems, and at lower levels in flowers, siliques and leaves.

The enzyme catalyses nicotinamide + H2O = nicotinate + NH4(+). It participates in cofactor biosynthesis; nicotinate biosynthesis; nicotinate from nicotinamide: step 1/1. Catalyzes the deamidation of nicotinamide, an early step in the NAD(+) salvage pathway. Prevents the accumulation of intracellular nicotinamide, a known inhibitor of poly(ADP-ribose) polymerases (PARP enzymes). This is Nicotinamidase 1 from Arabidopsis thaliana (Mouse-ear cress).